The chain runs to 248 residues: MYNTNFGFKKVDYTKKQWLINNIFSRVADKYDLMNDLMSIGLHRLWKDEFIMQIPNLNSNILDVASGSGDIALKLAKKAKDRGNNISLILSDINEEMLNNAKKKSIDLNLFQNIKFIVANAEELPFSDNSFDYYTIAFGIRNVPDINKALKEAYRVLKPMGKFVCLEFSKVKEGILKDFYKFYSFNIIPSIGQIIAGNKEAYEYLVESIALFPSQDDFRIMIKESGFEEVHYKNLSGGIVAIHSAYKI.

S-adenosyl-L-methionine contacts are provided by residues serine 68, aspartate 92, and 120–121 (NA).

This sequence belongs to the class I-like SAM-binding methyltransferase superfamily. MenG/UbiE family.

The enzyme catalyses a 2-demethylmenaquinol + S-adenosyl-L-methionine = a menaquinol + S-adenosyl-L-homocysteine + H(+). The catalysed reaction is a 2-methoxy-6-(all-trans-polyprenyl)benzene-1,4-diol + S-adenosyl-L-methionine = a 5-methoxy-2-methyl-3-(all-trans-polyprenyl)benzene-1,4-diol + S-adenosyl-L-homocysteine + H(+). The protein operates within quinol/quinone metabolism; menaquinone biosynthesis; menaquinol from 1,4-dihydroxy-2-naphthoate: step 2/2. It participates in cofactor biosynthesis; ubiquinone biosynthesis. Methyltransferase required for the conversion of demethylmenaquinol (DMKH2) to menaquinol (MKH2) and the conversion of 2-polyprenyl-6-methoxy-1,4-benzoquinol (DDMQH2) to 2-polyprenyl-3-methyl-6-methoxy-1,4-benzoquinol (DMQH2). This Rickettsia prowazekii (strain Madrid E) protein is Ubiquinone/menaquinone biosynthesis C-methyltransferase UbiE.